The chain runs to 751 residues: Catalase-peroxidase (751 aa).

The tract at residues methionine 1–arginine 24 is disordered. The segment at residues tryptophan 95–tyrosine 241 is a cross-link (tryptophyl-tyrosyl-methioninium (Trp-Tyr) (with M-267)). Residue histidine 96 is the Proton acceptor of the active site. Residues tyrosine 241–methionine 267 constitute a cross-link (tryptophyl-tyrosyl-methioninium (Tyr-Met) (with W-95)). Histidine 282 is a heme b binding site.

Belongs to the peroxidase family. Peroxidase/catalase subfamily. Homodimer or homotetramer. It depends on heme b as a cofactor. Post-translationally, formation of the three residue Trp-Tyr-Met cross-link is important for the catalase, but not the peroxidase activity of the enzyme.

It is found in the cytoplasm. It catalyses the reaction H2O2 + AH2 = A + 2 H2O. The catalysed reaction is 2 H2O2 = O2 + 2 H2O. In terms of biological role, bifunctional enzyme with both catalase and broad-spectrum peroxidase activity. The polypeptide is Catalase-peroxidase (Aspergillus oryzae (strain ATCC 42149 / RIB 40) (Yellow koji mold)).